The primary structure comprises 498 residues: MGGYVLAIDQGTTSTRAIVFDGNMKVAGVGQKEFTQHYPKPGWVEHDPEEIWASVLFTVGKAITAAGITAKDIAAVGITNQRETVVVWDRETGKPIHNAIVWQDRRTASYCDKLKRQDLEKLFTRRTGLLLDPYFSGTKLSWMLANVKGARARAAKGELCFGTIDTFLIWRLTGGKSFVTDATNASRTLMYNIASNAWDEDLLEILRVPAAMLPEVKDCAADFGITDASLFGATIPILGVAGDQQAATIGQACFERGMMKSTYGTGCFALLNTGTDIVRSKNRLLTTIAYRLDGETTYALEGSIFIAGAAVQWLRDGLKAIKSAADSGALAEKADPLQEVYLVPAFTGLGAPHWDPDARGAIFGLTRNTGPEEIVRAALEAVCYQSRDLLDAMHKDWRNGNGKETVLRVDGGMVASDWTMQRLADLLDAPVDRPTILETTALGAAWLAGSRAGVWPDREGFAKAWARDRRFEPAMDEKTRSGKLKGWKDAVRRTLSAG.

Residue Thr-12 coordinates ADP. ATP is bound by residues Thr-12, Thr-13, and Ser-14. Thr-12 lines the sn-glycerol 3-phosphate pocket. Arg-16 is a binding site for ADP. Sn-glycerol 3-phosphate-binding residues include Arg-82, Glu-83, Tyr-134, and Asp-243. Glycerol is bound by residues Arg-82, Glu-83, Tyr-134, Asp-243, and Gln-244. The ADP site is built by Thr-265 and Gly-308. 4 residues coordinate ATP: Thr-265, Gly-308, Gln-312, and Gly-412. Gly-412 is an ADP binding site.

Belongs to the FGGY kinase family.

It catalyses the reaction glycerol + ATP = sn-glycerol 3-phosphate + ADP + H(+). It participates in polyol metabolism; glycerol degradation via glycerol kinase pathway; sn-glycerol 3-phosphate from glycerol: step 1/1. With respect to regulation, inhibited by fructose 1,6-bisphosphate (FBP). Functionally, key enzyme in the regulation of glycerol uptake and metabolism. Catalyzes the phosphorylation of glycerol to yield sn-glycerol 3-phosphate. In Rhizobium rhizogenes (strain K84 / ATCC BAA-868) (Agrobacterium radiobacter), this protein is Glycerol kinase.